Here is a 506-residue protein sequence, read N- to C-terminus: Beta-glucosidase 13 (506 aa).

Residues 1 to 25 (MAAAGEVVMLGGILLPLLLVVAVSG) form the signal peptide. Position 49 (glutamine 49) interacts with a beta-D-glucoside. Asparagine 118 is a glycosylation site (N-linked (GlcNAc...) asparagine). A beta-D-glucoside is bound by residues histidine 153 and 198–199 (NE). The active-site Proton donor is the glutamate 199. The cysteines at positions 219 and 226 are disulfide-linked. N-linked (GlcNAc...) asparagine glycosylation occurs at asparagine 225. Tyrosine 342 contributes to the a beta-D-glucoside binding site. N-linked (GlcNAc...) asparagine glycans are attached at residues asparagine 357 and asparagine 367. Residue glutamate 413 coordinates a beta-D-glucoside. The active-site Nucleophile is glutamate 413. An N-linked (GlcNAc...) asparagine glycan is attached at asparagine 421. Residues tryptophan 462, 469–470 (EW), and phenylalanine 478 contribute to the a beta-D-glucoside site.

The protein belongs to the glycosyl hydrolase 1 family.

The catalysed reaction is Hydrolysis of terminal, non-reducing beta-D-glucosyl residues with release of beta-D-glucose.. This Oryza sativa subsp. japonica (Rice) protein is Beta-glucosidase 13 (BGLU13).